The sequence spans 210 residues: N-(5'-phosphoribosyl)anthranilate isomerase (210 aa).

The protein belongs to the TrpF family.

It catalyses the reaction N-(5-phospho-beta-D-ribosyl)anthranilate = 1-(2-carboxyphenylamino)-1-deoxy-D-ribulose 5-phosphate. Its pathway is amino-acid biosynthesis; L-tryptophan biosynthesis; L-tryptophan from chorismate: step 3/5. The sequence is that of N-(5'-phosphoribosyl)anthranilate isomerase from Staphylococcus aureus (strain MRSA252).